Reading from the N-terminus, the 210-residue chain is Thiamine-phosphate synthase 2 (210 aa).

4-amino-2-methyl-5-(diphosphooxymethyl)pyrimidine is bound by residues 38–42 and Asp70; that span reads QLREK. Residues Asp71 and Glu90 each contribute to the Mg(2+) site. Thr109 is a binding site for 4-amino-2-methyl-5-(diphosphooxymethyl)pyrimidine. 135 to 137 provides a ligand contact to 2-[(2R,5Z)-2-carboxy-4-methylthiazol-5(2H)-ylidene]ethyl phosphate; that stretch reads TTT. Residue Lys138 coordinates 4-amino-2-methyl-5-(diphosphooxymethyl)pyrimidine. Gly165 contacts 2-[(2R,5Z)-2-carboxy-4-methylthiazol-5(2H)-ylidene]ethyl phosphate.

The protein belongs to the thiamine-phosphate synthase family. Requires Mg(2+) as cofactor.

The enzyme catalyses 2-[(2R,5Z)-2-carboxy-4-methylthiazol-5(2H)-ylidene]ethyl phosphate + 4-amino-2-methyl-5-(diphosphooxymethyl)pyrimidine + 2 H(+) = thiamine phosphate + CO2 + diphosphate. It catalyses the reaction 2-(2-carboxy-4-methylthiazol-5-yl)ethyl phosphate + 4-amino-2-methyl-5-(diphosphooxymethyl)pyrimidine + 2 H(+) = thiamine phosphate + CO2 + diphosphate. It carries out the reaction 4-methyl-5-(2-phosphooxyethyl)-thiazole + 4-amino-2-methyl-5-(diphosphooxymethyl)pyrimidine + H(+) = thiamine phosphate + diphosphate. The protein operates within cofactor biosynthesis; thiamine diphosphate biosynthesis; thiamine phosphate from 4-amino-2-methyl-5-diphosphomethylpyrimidine and 4-methyl-5-(2-phosphoethyl)-thiazole: step 1/1. Its function is as follows. Condenses 4-methyl-5-(beta-hydroxyethyl)thiazole monophosphate (THZ-P) and 2-methyl-4-amino-5-hydroxymethyl pyrimidine pyrophosphate (HMP-PP) to form thiamine monophosphate (TMP). The protein is Thiamine-phosphate synthase 2 of Streptococcus pneumoniae serotype 4 (strain ATCC BAA-334 / TIGR4).